We begin with the raw amino-acid sequence, 299 residues long: Circadian clock oscillator protein KaiA (299 aa).

The KaiA N-terminal domain occupies 1-169 (MVSKLSLYLV…RLAEKLRERL (169 aa)). Residues 3–135 (SKLSLYLVTP…LHLAPSCALS (133 aa)) are psR domain, binds oxidized quinones. Residues 170 to 178 (GYLGVYYKR) are flexible linker. The KaiA C-terminal domain occupies 179–287 (NPKYFYRSLS…CEMYRRSIPR (109 aa)).

Homodimer. The KaiABC complex composition changes during the circadian cycle to control KaiC phosphorylation. Complexes KaiC(6), KaiA(2-4):KaiC(6), KaiB(6):KaiC(6) and KaiC(6):KaiB(6):KaiA(12) are among the most important forms, many form cooperatively. KaiA and CikA bind to the same region of the KaiB(fs) form and therefore compete.

Key component of the KaiABC oscillator complex, which constitutes the main circadian regulator in cyanobacteria. Complex composition changes during the circadian cycle to control KaiC phosphorylation. KaiA stimulates KaiC autophosphorylation, while KaiB sequesters KaiA, leading to KaiC autodephosphorylation. KaiA binding to the KaiC CII domain during the subjective day yields KaiA(2-4):KaiC(6) complexes which stimulate KaiC autophosphorylation. Phospho-Ser-431 KaiC accumulation triggers binding of KaiB during the subjective night to form the KaiB(6):KaiC(6) complex, leading to changes in the output regulators CikA and SasA. KaiB(6):KaiC(6) formation exposes a site for KaiA binding on KaiB that sequesters KaiA from KaiC's CII domain, making the KaiC(6):KaiB(6):KaiA(12) complex resulting in KaiC autodephosphorylation. Complete dephosphorylation of KaiC leads to dissociation of KaiA(2):KaiB(1), completing 1 cycle of the Kai oscillator. In terms of biological role, binds oxidized quinones via the N-terminal PsR domain, allowing it to sense redox changes and possibly mediate clock input. The sequence is that of Circadian clock oscillator protein KaiA from Picosynechococcus sp. (strain ATCC 27264 / PCC 7002 / PR-6) (Agmenellum quadruplicatum).